A 244-amino-acid chain; its full sequence is DNA repair protein RecO (244 aa).

The protein belongs to the RecO family.

Functionally, involved in DNA repair and RecF pathway recombination. The chain is DNA repair protein RecO from Koribacter versatilis (strain Ellin345).